Here is a 39-residue protein sequence, read N- to C-terminus: Anthranilate phosphoribosyltransferase (39 aa).

This sequence belongs to the anthranilate phosphoribosyltransferase family. Homodimer.

The enzyme catalyses N-(5-phospho-beta-D-ribosyl)anthranilate + diphosphate = 5-phospho-alpha-D-ribose 1-diphosphate + anthranilate. Its pathway is amino-acid biosynthesis; L-tryptophan biosynthesis; L-tryptophan from chorismate: step 2/5. Functionally, catalyzes the transfer of the phosphoribosyl group of 5-phosphorylribose-1-pyrophosphate (PRPP) to anthranilate to yield N-(5'-phosphoribosyl)-anthranilate (PRA). In Pectobacterium carotovorum (Erwinia carotovora), this protein is Anthranilate phosphoribosyltransferase (trpD).